The chain runs to 400 residues: Enoyl-[acyl-carrier-protein] reductase [NADH] (400 aa).

Residues 48–53 (GASTGY), 74–75 (FE), 111–112 (DA), and 139–140 (LA) contribute to the NAD(+) site. Residue Y225 participates in substrate binding. The Proton donor role is filled by Y235. NAD(+) is bound by residues K244 and 273 to 275 (VVT).

This sequence belongs to the TER reductase family. As to quaternary structure, monomer.

The enzyme catalyses a 2,3-saturated acyl-[ACP] + NAD(+) = a (2E)-enoyl-[ACP] + NADH + H(+). Its pathway is lipid metabolism; fatty acid biosynthesis. Functionally, involved in the final reduction of the elongation cycle of fatty acid synthesis (FAS II). Catalyzes the reduction of a carbon-carbon double bond in an enoyl moiety that is covalently linked to an acyl carrier protein (ACP). This Burkholderia ambifaria (strain ATCC BAA-244 / DSM 16087 / CCUG 44356 / LMG 19182 / AMMD) (Burkholderia cepacia (strain AMMD)) protein is Enoyl-[acyl-carrier-protein] reductase [NADH].